A 155-amino-acid chain; its full sequence is 17.6 kDa class II heat shock protein (155 aa).

Positions 38–155 constitute a sHSP domain; the sequence is DAKAMAATPA…KPKTIQVQVA (118 aa).

The protein belongs to the small heat shock protein (HSP20) family. As to quaternary structure, may form oligomeric structures.

The protein localises to the cytoplasm. The chain is 17.6 kDa class II heat shock protein (HSP17.6) from Arabidopsis thaliana (Mouse-ear cress).